The sequence spans 200 residues: Potassium-transporting ATPase KdpC subunit (200 aa).

A helical membrane pass occupies residues 13 to 33 (ITLIFWLITAIIYPLAILVVG).

Belongs to the KdpC family. In terms of assembly, the system is composed of three essential subunits: KdpA, KdpB and KdpC.

It localises to the cell membrane. Part of the high-affinity ATP-driven potassium transport (or Kdp) system, which catalyzes the hydrolysis of ATP coupled with the electrogenic transport of potassium into the cytoplasm. This subunit acts as a catalytic chaperone that increases the ATP-binding affinity of the ATP-hydrolyzing subunit KdpB by the formation of a transient KdpB/KdpC/ATP ternary complex. This chain is Potassium-transporting ATPase KdpC subunit, found in Anabaena sp. (strain L31).